The following is a 100-amino-acid chain: Large ribosomal subunit protein uL23 (100 aa).

This sequence belongs to the universal ribosomal protein uL23 family. As to quaternary structure, part of the 50S ribosomal subunit. Contacts protein L29, and trigger factor when it is bound to the ribosome.

In terms of biological role, one of the early assembly proteins it binds 23S rRNA. One of the proteins that surrounds the polypeptide exit tunnel on the outside of the ribosome. Forms the main docking site for trigger factor binding to the ribosome. The polypeptide is Large ribosomal subunit protein uL23 (Thermosynechococcus vestitus (strain NIES-2133 / IAM M-273 / BP-1)).